A 112-amino-acid chain; its full sequence is Nitrogen regulatory protein P-II (112 aa).

At Y51 the chain carries O-UMP-tyrosine.

Belongs to the P(II) protein family. Homotrimer.

It localises to the plastid. The protein localises to the chloroplast. Functionally, P-II indirectly controls the transcription of the glutamine synthetase gene (glnA). P-II prevents NR-II-catalyzed conversion of NR-I to NR-I-phosphate, the transcriptional activator of glnA. When P-II is uridylylated to P-II-UMP, these events are reversed. When the ratio of Gln to 2-ketoglutarate decreases, P-II is uridylylated to P-II-UMP, which causes the deadenylation of glutamine synthetase, so activating the enzyme. This is Nitrogen regulatory protein P-II (glnB) from Pyropia yezoensis (Susabi-nori).